Consider the following 577-residue polypeptide: Solute carrier family 22 member 16 (577 aa).

A helical membrane pass occupies residues 23–43; the sequence is LYFICAFQNISCGIHYLASVF. N57, N65, N68, and N108 each carry an N-linked (GlcNAc...) asparagine glycan. 5 helical membrane-spanning segments follow: residues 152 to 172, 183 to 203, 214 to 234, 244 to 264, and 268 to 288; these read WLAMLIQPLFMFGVLLGSVTF, VVLWATSSSMFLFGIAAAFAV, FLAMVASGYLVVGFVYVMEFI, VHLHSFFAVGTLLVALTGYLV, and WLYQMILSTVTVPFILCCWVL. N345 and N352 each carry an N-linked (GlcNAc...) asparagine glycan. The next 6 helical transmembrane spans lie at 359–379, 389–409, 416–436, 441–461, 476–496, and 501–521; these read TLTVWLIWFTGSLGFYSFSLN, LNLFLLGVVEIPAYTFVCIAM, TVLAYSLFCSALACGVVMVIP, ILGVVTAMVGKFAIGAAFGLI, LAVGSGSMVCRLASILAPFSV, and IWIFIPQLFVGTMALLSGVLT. The tract at residues 543–577 is disordered; that stretch reads ESENESKSSKLLLTTNNSGLEKTEAITPRDSGLGE. Residues N546 and N558 are each glycosylated (N-linked (GlcNAc...) asparagine). The segment covering 551–560 has biased composition (low complexity); the sequence is SKLLLTTNNS.

This sequence belongs to the major facilitator (TC 2.A.1) superfamily. Organic cation transporter (TC 2.A.1.19) family. Expressed in testis and epididymis (at protein level). Expressed in endometrium (at protein level); highly expressed during the normal secretory phase, but expression is significantly reduced in the proliferative phase. Expressed at lower levels in adult tissues including bone marrow (at protein level). Expressed in hematopoietic cells, including CD34(+) leukocytes. Expressed in fetal liver (at protein level), brain, lung, kidney, heart, skeletal muscle, spleen and thymus. Expressed in leukemia cells. Abundantly expressed in ovarian cancer clear-cell adenocarcinoma.

The protein localises to the cell membrane. It catalyses the reaction (R)-carnitine(in) = (R)-carnitine(out). The catalysed reaction is spermidine(in) = spermidine(out). In terms of biological role, facilitative organic cation transporter that mediates the transport of carnitine as well as the polyamine spermidine. Mediates the partially Na(+)-dependent bidirectional transport of carnitine. May mediate L-carnitine secretion from testis epididymal epithelium into the lumen which is involved in the maturation of spermatozoa. This Homo sapiens (Human) protein is Solute carrier family 22 member 16.